A 382-amino-acid polypeptide reads, in one-letter code: Calcium/calmodulin-dependent protein kinase (382 aa).

In terms of domain architecture, Protein kinase spans 23-278 (YKFGRTLGAG…SKEALGHIWL (256 aa)). Residues 29-37 (LGAGTYGVV) and lysine 50 contribute to the ATP site. The active-site Proton acceptor is the aspartate 142. A calmodulin-binding region spans residues 291–301 (ELEAYRRRARL). 2 disordered regions span residues 318–344 (KEHE…GDGS) and 359–382 (QKQE…FSNA).

Belongs to the protein kinase superfamily. CAMK Ser/Thr protein kinase family. CaMK subfamily.

The catalysed reaction is L-seryl-[protein] + ATP = O-phospho-L-seryl-[protein] + ADP + H(+). It catalyses the reaction L-threonyl-[protein] + ATP = O-phospho-L-threonyl-[protein] + ADP + H(+). The chain is Calcium/calmodulin-dependent protein kinase from Metarhizium anisopliae (Entomophthora anisopliae).